Here is a 457-residue protein sequence, read N- to C-terminus: Siroheme synthase 2 (457 aa).

A precorrin-2 dehydrogenase /sirohydrochlorin ferrochelatase region spans residues 1-204 (MDHLPIFCQL…DDEQAVTRIT (204 aa)). Residues 22–23 (DV) and 43–44 (LA) contribute to the NAD(+) site. Residue Ser-128 is modified to Phosphoserine. The tract at residues 216–457 (GEVVLVGAGP…RDKLNWFSSK (242 aa)) is uroporphyrinogen-III C-methyltransferase. An S-adenosyl-L-methionine-binding site is contributed by Pro-225. Asp-248 (proton acceptor) is an active-site residue. Residue Lys-270 is the Proton donor of the active site. S-adenosyl-L-methionine-binding positions include 301-303 (GGD), Ile-306, 331-332 (TA), Met-382, and Gly-411.

It in the N-terminal section; belongs to the precorrin-2 dehydrogenase / sirohydrochlorin ferrochelatase family. The protein in the C-terminal section; belongs to the precorrin methyltransferase family.

It catalyses the reaction uroporphyrinogen III + 2 S-adenosyl-L-methionine = precorrin-2 + 2 S-adenosyl-L-homocysteine + H(+). The enzyme catalyses precorrin-2 + NAD(+) = sirohydrochlorin + NADH + 2 H(+). It carries out the reaction siroheme + 2 H(+) = sirohydrochlorin + Fe(2+). The protein operates within cofactor biosynthesis; adenosylcobalamin biosynthesis; precorrin-2 from uroporphyrinogen III: step 1/1. It functions in the pathway cofactor biosynthesis; adenosylcobalamin biosynthesis; sirohydrochlorin from precorrin-2: step 1/1. Its pathway is porphyrin-containing compound metabolism; siroheme biosynthesis; precorrin-2 from uroporphyrinogen III: step 1/1. It participates in porphyrin-containing compound metabolism; siroheme biosynthesis; siroheme from sirohydrochlorin: step 1/1. The protein operates within porphyrin-containing compound metabolism; siroheme biosynthesis; sirohydrochlorin from precorrin-2: step 1/1. In terms of biological role, multifunctional enzyme that catalyzes the SAM-dependent methylations of uroporphyrinogen III at position C-2 and C-7 to form precorrin-2 via precorrin-1. Then it catalyzes the NAD-dependent ring dehydrogenation of precorrin-2 to yield sirohydrochlorin. Finally, it catalyzes the ferrochelation of sirohydrochlorin to yield siroheme. In Cronobacter sakazakii (strain ATCC BAA-894) (Enterobacter sakazakii), this protein is Siroheme synthase 2.